Here is a 91-residue protein sequence, read N- to C-terminus: Ixochymostatin (91 aa).

The first 20 residues, 1-20 (MKTYVLQALLLTLAVAVVRA), serve as a signal peptide directing secretion. Intrachain disulfides connect C34–C70, C43–C66, C48–C62, C53–C90, and C72–C84. The region spanning 34 to 90 (CAEGETWKECVGSSCAELTCEHPEPSLGCTYDCNYGCYCAPDFFRNANKECVKKDKC) is the TIL domain.

Belongs to the serine protease inhibitor-like (TIL domain-containing) family. In terms of tissue distribution, salivary gland. Midgut.

It localises to the secreted. Its function is as follows. Tight-binding competitive inhibitor of chymotrypsin-like proteases; inhibits host chymase, cathepsin G (CTSG) and chymotrypsin. Inhibits chymase-mediated generation of vasoconstrictor peptides: angiotensin II and endothelin I. Reduces chymase-mediated vascular permeability and vascular endothelial-cadherin degradation. This Ixodes scapularis (Black-legged tick) protein is Ixochymostatin.